Reading from the N-terminus, the 498-residue chain is 3-octaprenyl-4-hydroxybenzoate carboxy-lyase (498 aa).

Asn175 is a Mn(2+) binding site. Prenylated FMN is bound by residues 178–180, 192–194, and 197–198; these read IYR, RWL, and RG. Glu241 provides a ligand contact to Mn(2+). Asp290 (proton donor) is an active-site residue.

It belongs to the UbiD family. Homohexamer. It depends on prenylated FMN as a cofactor. Mn(2+) is required as a cofactor.

The protein resides in the cell membrane. It catalyses the reaction a 4-hydroxy-3-(all-trans-polyprenyl)benzoate + H(+) = a 2-(all-trans-polyprenyl)phenol + CO2. Its pathway is cofactor biosynthesis; ubiquinone biosynthesis. In terms of biological role, catalyzes the decarboxylation of 3-octaprenyl-4-hydroxy benzoate to 2-octaprenylphenol, an intermediate step in ubiquinone biosynthesis. The chain is 3-octaprenyl-4-hydroxybenzoate carboxy-lyase from Pectobacterium atrosepticum (strain SCRI 1043 / ATCC BAA-672) (Erwinia carotovora subsp. atroseptica).